The following is a 103-amino-acid chain: MANSKRLFGVVRRKLLRRSQSRITIIRSSAPETTREEIAAVKIQAFFRGHLARRAFKALKSLVKLQAVARGVLVRRQARIALHCMHALARLQVRVRARQLLSH.

The interval Val10–Arg22 is calmodulin-binding. 2 IQ domains span residues Glu36–Leu62 and Val63–Ala87.

Belongs to the IQD family. Interacts with calmodulin (CaM and CML) at the plasma membrane in a calcium ion Ca(2+)- independent manner, however, Ca(2+) seems to modulate calmodulin binding. Binds to multiple calmodulin (CaM) in the presence of Ca(2+) and CaM-like proteins.

It is found in the nucleus. The protein localises to the nucleolus. Its subcellular location is the cell membrane. In terms of biological role, may be involved in cooperative interactions with calmodulins or calmodulin-like proteins. Recruits calmodulin proteins to microtubules, thus being a potential scaffold in cellular signaling and trafficking. May associate with nucleic acids and regulate gene expression at the transcriptional or post-transcriptional level. The polypeptide is Protein IQ-DOMAIN 20 (Arabidopsis thaliana (Mouse-ear cress)).